The following is a 1425-amino-acid chain: MDVLEMLRASASGSYNTIFSDAWCQYVSKQITATVYMYFALVMMSLLFIAWFLYFKRMARLRLRDEIARSISTVTNSSGDMRGLRFRKRDKMLFYGRRMLRKMKNVSGQMYSSGKGYKRRAVMRFARRILQLRRDNMPLEMRTVEPPAEYLEETIEGSDRVPPDALYMLQSIRIFGHFEKPVFLRLCKHTQLLELMAGDYLFKITDPDDSVYIVQSGMINVYISNADGSTLSLKTVRKGESVTSLLSFIDVLSGNPSYYKTVTAKAIEKSVVIRLPMQAFEEVFQDNPDVMIRVIQVIMIRLQRVLFTALRNYLGLNAELVQNHMRYKSVSTMSGPINSQTSQSSRQAPNGPPMVISQMNLMQSAVSGTGSSGVSVTVTRPPSSPSRHSREEHTLSDPNPNPDGSFHGTTNLFTEVHGDAPNADLFHQQQQQHSVGNLSTRRSSITLMAPDGSHSCLQTPGVTTSIDMRLVQSSAVDSLRKELGLSEEDSHIIEPFVELRELEPNVTLITEGNADDVCVWFVMTGTLAVYQSNQDATRAKQDKSDMLIHFVHPGEIVGGLAMLTGEASAYTIRSRSITRIAFIRRAAIYQIMRQRPRIVLDLGNGVVRRLSPLVRQCDYALDWIFLESGRAVYRQDESSDSTYIVLSGRMRSVITHPGGKKEIVGEYGKGDLVGIVEMITETSRTTTVMAVRDSELAKLPEGLFNAIKLRYPIVVTKLISFLSHRFLGSMQTRSGSGAPGAPVEANPVTHKYSTVALVPITDEVPMTPFTYELYHSLCAIGPVLRLTSDVVRKQLGSNIFEAANEYRLTSWLAQQEDRNIITLYQCDSSLSAWTQRCMRQADVILIVGLGDRSHLVGKFEREIDRLAMRTQKELVLLYPEASNAKPANTLSWLNARPWVTKHHHVLCVKRIFTRKSQYRINDLYSRVLLSEPNMHSDFSRLARWLTGNSIGLVLGGGGARGAAHIGMLKAIQEAGIPVDMVGGVSIGALMGALWCSERNITTVTQKAREWSKKMTKWFLQLLDLTYPITSMFSGREFNKTIHDTFGDVSIEDLWIPYFTLTTDITASCHRIHTNGSLWRYVRSSMSLSGYMPPLCDPKDGHLLLDGGYVNNLPADVMHNLGAAHIIAIDVGSQDDTDLTNYGDDLSGWWLLYKKWNPFTSPVKVPDLPDIQSRLAYVSCVRQLEEVKNSDYCEYIRPPIDKYKTLAFGSFDEIRDVGYVFGKNYFESMAKAGRLGRFNQWFNKEPPKRVNHASLNEYTFIDLAQIVCRLPETYAVNTAELFSEDEDCDGYISEPTTLNTDRRRIQVSRAGNSLSFSETEMDSDVELDLKLERKTDKSTQSSPPSNSRSDMRGKEEARHMSNWHWGVKHKDETGSGATEATKTQTGQEQELQQEQQDQGATAEQLVDKDKEENKENRSSPNNETKN.

Over 1 to 34 (MDVLEMLRASASGSYNTIFSDAWCQYVSKQITAT) the chain is Lumenal. A helical transmembrane segment spans residues 35-55 (VYMYFALVMMSLLFIAWFLYF). Residues 56-1425 (KRMARLRLRD…RSSPNNETKN (1370 aa)) lie on the Cytoplasmic side of the membrane. An a nucleoside 3',5'-cyclic phosphate-binding site is contributed by 174–301 (IFGHFEKPVF…IRVIQVIMIR (128 aa)). 2 stretches are compositionally biased toward polar residues: residues 332-348 (TMSG…SRQA) and 357-366 (SQMNLMQSAV). Residues 332–410 (TMSGPINSQT…NPDGSFHGTT (79 aa)) are disordered. A compositionally biased stretch (low complexity) spans 367-381 (SGTGSSGVSVTVTRP). S444 and S453 each carry phosphoserine. A nucleoside 3',5'-cyclic phosphate is bound by residues 482–609 (ELGL…VVRR) and 598–727 (IVLD…HRFL). The PNPLA domain maps to 952-1118 (LVLGGGGARG…VNNLPADVMH (167 aa)). The short motif at 956–961 (GGGARG) is the GXGXXG element. A GXSXG motif is present at residues 983-987 (GVSIG). S985 functions as the Nucleophile in the catalytic mechanism. Residue D1105 is the Proton acceptor of the active site. The DGA/G motif lies at 1105-1107 (DGG). S1160 carries the phosphoserine modification. The tract at residues 1330–1425 (LERKTDKSTQ…RSSPNNETKN (96 aa)) is disordered. Residues 1337 to 1347 (STQSSPPSNSR) show a composition bias toward low complexity. Positions 1348 to 1358 (SDMRGKEEARH) are enriched in basic and acidic residues. Over residues 1380–1403 (TKTQTGQEQELQQEQQDQGATAEQ) the composition is skewed to low complexity. The span at 1404 to 1416 (LVDKDKEENKENR) shows a compositional bias: basic and acidic residues.

The protein belongs to the NTE family. Interacts with Pka-C3; interaction inhibits the catalytic function of Pka-C3 and the esterase activity of sws. Isoform A and isoform B are expressed in the entire brain cortex; cortical cell bodies of adult brain. Sws and Pka-C3 are colocalized in all neurons.

The protein resides in the endoplasmic reticulum membrane. The enzyme catalyses a 1-acyl-sn-glycero-3-phosphocholine + H2O = sn-glycerol 3-phosphocholine + a fatty acid + H(+). Phospholipase B that deacylates intracellular phosphatidylcholine (PtdCho), generating glycerophosphocholine (GroPtdCho). This deacylation occurs at both sn-2 and sn-1 positions of PtdCho. Its specific chemical modification by certain organophosphorus (OP) compounds leads to distal axonopathy. Plays a role in the signaling mechanism between neurons and glia that regulates glia wrapping during development of the adult brain. Essential for membrane lipid homeostasis and cell survival in both neurons and glia of the adult brain. This is Neuropathy target esterase sws (sws) from Drosophila melanogaster (Fruit fly).